Here is a 523-residue protein sequence, read N- to C-terminus: Peptide chain release factor 3 (523 aa).

The tr-type G domain maps to 10-277 (EKRRTFAIIS…SFVDLAPAPE (268 aa)). Residues 19–26 (SHPDAGKT), 87–91 (DTPGH), and 141–144 (NKLD) contribute to the GTP site.

It belongs to the TRAFAC class translation factor GTPase superfamily. Classic translation factor GTPase family. PrfC subfamily.

The protein resides in the cytoplasm. Functionally, increases the formation of ribosomal termination complexes and stimulates activities of RF-1 and RF-2. It binds guanine nucleotides and has strong preference for UGA stop codons. It may interact directly with the ribosome. The stimulation of RF-1 and RF-2 is significantly reduced by GTP and GDP, but not by GMP. The chain is Peptide chain release factor 3 from Lactobacillus acidophilus (strain ATCC 700396 / NCK56 / N2 / NCFM).